The primary structure comprises 551 residues: Cytochrome c oxidase subunit 1 homolog (551 aa).

Helical transmembrane passes span 14-34 (GELG…VVAA), 40-60 (EYAF…FVIG), and 88-108 (VGTL…VIIA). A heme b-binding site is contributed by His-132. 8 helical membrane passes run 133 to 153 (TSAV…FYVV), 169 to 189 (FVVL…LLGI), 202 to 222 (ADLW…GTVL), 229 to 249 (IYVA…LHLG), 280 to 300 (GHNA…YYFI), 313 to 333 (LSIV…PHHL), 345 to 365 (LGMT…INGL), and 383 to 403 (MMVV…MMSV). 3 residues coordinate Cu cation: His-281, His-331, and His-332. Heme b contacts are provided by His-419 and His-421. The next 3 membrane-spanning stretches (helical) occupy residues 424–444 (ALGW…PWLW), 459–479 (FWVS…AGIL), and 513–533 (IGGI…FMTI).

The protein belongs to the heme-copper respiratory oxidase family. Requires Cu(2+) as cofactor. It depends on heme b as a cofactor.

It localises to the cell membrane. It catalyses the reaction 4 Fe(II)-[cytochrome c] + O2 + 8 H(+)(in) = 4 Fe(III)-[cytochrome c] + 2 H2O + 4 H(+)(out). It functions in the pathway energy metabolism; oxidative phosphorylation. Functionally, cytochrome c oxidase is the component of the respiratory chain that catalyzes the reduction of oxygen to water. Subunits 1-3 form the functional core of the enzyme complex. Co I is the catalytic subunit of the enzyme. Electrons originating in cytochrome c or a quinol are transferred to the bimetallic center formed by a high-spin heme and copper B. The protein is Cytochrome c oxidase subunit 1 homolog (fixN) of Azorhizobium caulinodans (strain ATCC 43989 / DSM 5975 / JCM 20966 / LMG 6465 / NBRC 14845 / NCIMB 13405 / ORS 571).